The primary structure comprises 428 residues: Serine--tRNA ligase (428 aa).

Position 231 to 233 (231 to 233 (TAE)) interacts with L-serine. Residue 262-264 (RAE) coordinates ATP. E285 lines the L-serine pocket. ATP is bound at residue 349–352 (EISS). S385 is a binding site for L-serine.

Belongs to the class-II aminoacyl-tRNA synthetase family. Type-1 seryl-tRNA synthetase subfamily. In terms of assembly, homodimer. The tRNA molecule binds across the dimer.

It is found in the cytoplasm. The catalysed reaction is tRNA(Ser) + L-serine + ATP = L-seryl-tRNA(Ser) + AMP + diphosphate + H(+). It catalyses the reaction tRNA(Sec) + L-serine + ATP = L-seryl-tRNA(Sec) + AMP + diphosphate + H(+). Its pathway is aminoacyl-tRNA biosynthesis; selenocysteinyl-tRNA(Sec) biosynthesis; L-seryl-tRNA(Sec) from L-serine and tRNA(Sec): step 1/1. Functionally, catalyzes the attachment of serine to tRNA(Ser). Is also able to aminoacylate tRNA(Sec) with serine, to form the misacylated tRNA L-seryl-tRNA(Sec), which will be further converted into selenocysteinyl-tRNA(Sec). This is Serine--tRNA ligase from Methylorubrum populi (strain ATCC BAA-705 / NCIMB 13946 / BJ001) (Methylobacterium populi).